A 188-amino-acid polypeptide reads, in one-letter code: Trafficking protein particle complex subunit 5 (188 aa).

Serine 10 carries the phosphoserine modification.

Belongs to the TRAPP small subunits family. BET3 subfamily. Component of the multisubunit TRAPP (transport protein particle) complex, which includes at least TRAPPC2, TRAPPC2L, TRAPPC3, TRAPPC3L, TRAPPC4, TRAPPC5, TRAPPC8, TRAPPC9, TRAPPC10, TRAPPC11 and TRAPPC12.

It localises to the golgi apparatus. The protein localises to the cis-Golgi network. It is found in the endoplasmic reticulum. Functionally, may play a role in vesicular transport from endoplasmic reticulum to Golgi. The protein is Trafficking protein particle complex subunit 5 (TRAPPC5) of Bos taurus (Bovine).